A 656-amino-acid chain; its full sequence is Nuclear elongation and deformation protein 1 (656 aa).

2 positions are modified to phosphoserine: Ser-99 and Ser-103. A compositionally biased stretch (polar residues) spans 99-118 (SPIVSPTTSPKQTPSINVTE). The interval 99 to 121 (SPIVSPTTSPKQTPSINVTEPQD) is disordered. A Phosphothreonine modification is found at Thr-106. Residues Ser-107, Ser-159, and Ser-286 each carry the phosphoserine modification. 2 disordered regions span residues 282–328 (VYGH…VSES) and 587–656 (SDEE…ENAV). Residues 291–300 (PSRTPASPKS) are compositionally biased toward low complexity. Phosphoserine is present on residues Ser-318, Ser-321, and Ser-587. Residues 318–328 (SEQSLSPVSES) are compositionally biased toward polar residues. A compositionally biased stretch (low complexity) spans 596 to 609 (KSTSKSPKTPKNTK). Residues 640-656 (FEGEEDEEGEEDVENAV) are compositionally biased toward acidic residues.

Belongs to the lipin family. As to quaternary structure, interacts with dis3, pim1 and nup189.

In terms of biological role, may have a role in the maintenance of the nuclear envelope structure and in minichromosome stability. This is Nuclear elongation and deformation protein 1 (ned1) from Schizosaccharomyces pombe (strain 972 / ATCC 24843) (Fission yeast).